The following is a 180-amino-acid chain: MNFKGTTVIAIRRAGKTVVAADGQVTFGYTVLKSNAVKIRKLVNGKILAGFAGSTSDAITLFEKFEEKVKSREDGIIDIKRAAVDLAKDWRSDKILHKLEAMMLVADSDNILLISGTGDVVEPEEDVISIGSGGNYAYSAALAYMENKKLSAADIAFKALKIAARVCIYTNSNIVLEEIG.

Thr-6 is a catalytic residue. Ala-164, Cys-167, and Thr-170 together coordinate Na(+).

It belongs to the peptidase T1B family. HslV subfamily. A double ring-shaped homohexamer of HslV is capped on each side by a ring-shaped HslU homohexamer. The assembly of the HslU/HslV complex is dependent on binding of ATP.

The protein resides in the cytoplasm. It carries out the reaction ATP-dependent cleavage of peptide bonds with broad specificity.. Allosterically activated by HslU binding. Protease subunit of a proteasome-like degradation complex believed to be a general protein degrading machinery. The sequence is that of ATP-dependent protease subunit HslV from Borrelia duttonii (strain Ly).